A 433-amino-acid polypeptide reads, in one-letter code: GTPase Der (433 aa).

EngA-type G domains are found at residues 3–167 (NRVV…KEEK) and 175–347 (IKVA…KDYT). Residues 9–16 (GRPNVGKS), 56–60 (DTGGL), 119–122 (NKID), 181–188 (GRPNVGKS), 228–232 (DTAGV), and 293–296 (NKMD) each bind GTP. Positions 348-432 (KQHKTSFVNR…PIKLVIKGRE (85 aa)) constitute a KH-like domain.

Belongs to the TRAFAC class TrmE-Era-EngA-EngB-Septin-like GTPase superfamily. EngA (Der) GTPase family. Associates with the 50S ribosomal subunit.

Its function is as follows. GTPase that plays an essential role in the late steps of ribosome biogenesis. The polypeptide is GTPase Der (Aquifex aeolicus (strain VF5)).